We begin with the raw amino-acid sequence, 64 residues long: Conotoxin Cal6.24 (64 aa).

The signal sequence occupies residues 1-22 (MKLTCVMIVAVLVLTVCKVVTS). 3 disulfide bridges follow: C32–C50, C40–C54, and C49–C60.

As to expression, expressed by the venom duct.

It is found in the secreted. Its function is as follows. Probable neurotoxin. This chain is Conotoxin Cal6.24, found in Californiconus californicus (California cone).